The chain runs to 280 residues: DegV domain-containing protein SPy_1698/M5005_Spy1391 (280 aa).

The DegV domain occupies 3–280 (WKIVTDSGCD…DGGLLMGYEI (278 aa)). Positions 63 and 91 each coordinate hexadecanoate.

Its function is as follows. May bind long-chain fatty acids, such as palmitate, and may play a role in lipid transport or fatty acid metabolism. The chain is DegV domain-containing protein SPy_1698/M5005_Spy1391 from Streptococcus pyogenes serotype M1.